The following is a 345-amino-acid chain: DNA primase small subunit PriS (345 aa).

Catalysis depends on residues Asp-95 and Asp-97. Positions 106, 108, 114, and 117 each coordinate Zn(2+). A Zinc knuckle motif motif is present at residues 106–117; it reads CNHEPGKVCPIC. The active site involves Asp-280.

This sequence belongs to the eukaryotic-type primase small subunit family. Heterodimer of a small subunit (PriS) and a large subunit (PriL). It depends on Mg(2+) as a cofactor. Mn(2+) serves as cofactor.

Catalytic subunit of DNA primase, an RNA polymerase that catalyzes the synthesis of short RNA molecules used as primers for DNA polymerase during DNA replication. The small subunit contains the primase catalytic core and has DNA synthesis activity on its own, synthesizing DNA strands up to 3 kB. Binding to the large subunit stabilizes and modulates the activity, increasing the rate of DNA synthesis while decreasing the length of the DNA fragments, and conferring RNA synthesis capability for RNA fragments up to 150 bases. The DNA polymerase activity may enable DNA primase to also catalyze primer extension after primer synthesis. May also play a role in DNA repair. Displays gap-filling and strand-displacement activities. The protein is DNA primase small subunit PriS of Pyrococcus abyssi (strain GE5 / Orsay).